Here is a 459-residue protein sequence, read N- to C-terminus: Adenylosuccinate synthetase isozyme 1 C (459 aa).

Positions 1–31 (MSFSWSAKDHKSYTNPPSNPTQGLKRPRNDT) are disordered. The span at 13 to 22 (YTNPPSNPTQ) shows a compositional bias: polar residues. Residues 44–50 (GDEGKGK) and 72–74 (GHT) contribute to the GTP site. Aspartate 45 functions as the Proton acceptor in the catalytic mechanism. Mg(2+) contacts are provided by aspartate 45 and glycine 72. Aspartate 45 is a binding site for substrate. Residues 45-48 (DEGK), 70-73 (NAGH), threonine 165, arginine 179, asparagine 258, threonine 273, and arginine 337 contribute to the IMP site. Histidine 73 serves as the catalytic Proton donor. A substrate-binding site is contributed by 333 to 339 (VTTGRKR). GTP contacts are provided by residues arginine 339, 365 to 367 (KLD), and 447 to 450 (GVGK).

Belongs to the adenylosuccinate synthetase family. Homodimer. Mg(2+) serves as cofactor.

The protein localises to the cytoplasm. The enzyme catalyses IMP + L-aspartate + GTP = N(6)-(1,2-dicarboxyethyl)-AMP + GDP + phosphate + 2 H(+). It functions in the pathway purine metabolism; AMP biosynthesis via de novo pathway; AMP from IMP: step 1/2. Component of the purine nucleotide cycle (PNC), which interconverts IMP and AMP to regulate the nucleotide levels in various tissues, and which contributes to glycolysis and ammoniagenesis. Catalyzes the first committed step in the biosynthesis of AMP from IMP. The polypeptide is Adenylosuccinate synthetase isozyme 1 C (adss1c) (Salmo salar (Atlantic salmon)).